Consider the following 879-residue polypeptide: Valine--tRNA ligase (879 aa).

Residues 43–53 (PNVTGVLHMGH) carry the 'HIGH' region motif. The 'KMSKS' region motif lies at 534-538 (KMSKS). ATP is bound at residue lysine 537. A coiled-coil region spans residues 807–878 (LGNMIDVEAE…LKESIAALKK (72 aa)).

This sequence belongs to the class-I aminoacyl-tRNA synthetase family. ValS type 1 subfamily. As to quaternary structure, monomer.

The protein resides in the cytoplasm. It catalyses the reaction tRNA(Val) + L-valine + ATP = L-valyl-tRNA(Val) + AMP + diphosphate. Functionally, catalyzes the attachment of valine to tRNA(Val). As ValRS can inadvertently accommodate and process structurally similar amino acids such as threonine, to avoid such errors, it has a 'posttransfer' editing activity that hydrolyzes mischarged Thr-tRNA(Val) in a tRNA-dependent manner. The protein is Valine--tRNA ligase of Bacteroides thetaiotaomicron (strain ATCC 29148 / DSM 2079 / JCM 5827 / CCUG 10774 / NCTC 10582 / VPI-5482 / E50).